Here is a 135-residue protein sequence, read N- to C-terminus: uncharacterized protein (135 aa).

Belongs to the MG067/MG068/MG395 family.

This is an uncharacterized protein from Mycoplasma pneumoniae (strain ATCC 29342 / M129 / Subtype 1) (Mycoplasmoides pneumoniae).